The sequence spans 93 residues: SH3 domain-binding glutamic acid-rich-like protein 3 (93 aa).

An N-acetylserine modification is found at Ser-2. In terms of domain architecture, Glutaredoxin spans 2–93; sequence SGLRVYSTSV…NTLQEFLKLA (92 aa). O-linked (GalNAc...) threonine glycosylation occurs at Thr-9.

The protein belongs to the SH3BGR family. Homodimer. Interacts with MYO1C (via its IQ motifs); the interaction is dependent on calcium and takes place at membrane ruffles. Post-translationally, may be glycosylated.

It is found in the cytoplasm. Its subcellular location is the cytosol. It localises to the cell projection. The protein resides in the ruffle membrane. The protein localises to the nucleus. Its function is as follows. Could act as a modulator of glutaredoxin biological activity. May play a role in cytoskeleton organization. The polypeptide is SH3 domain-binding glutamic acid-rich-like protein 3 (SH3BGRL3) (Bos taurus (Bovine)).